Here is a 648-residue protein sequence, read N- to C-terminus: Macrolide export ATP-binding/permease protein MacB (648 aa).

The region spanning 5 to 243 (LELKDIRRSY…AGGTEPVVNT (239 aa)) is the ABC transporter domain. 41–48 (GASGSGKS) is a binding site for ATP. A run of 4 helical transmembrane segments spans residues 273–293 (LLTM…VVVG), 523–543 (LFLT…VMNI), 576–596 (AVLV…LIAF), and 600–620 (LFLP…AFLC).

The protein belongs to the ABC transporter superfamily. Macrolide exporter (TC 3.A.1.122) family. Homodimer. Part of the tripartite efflux system MacAB-TolC, which is composed of an inner membrane transporter, MacB, a periplasmic membrane fusion protein, MacA, and an outer membrane component, TolC. The complex forms a large protein conduit and can translocate molecules across both the inner and outer membranes. Interacts with MacA.

The protein resides in the cell inner membrane. In terms of biological role, part of the tripartite efflux system MacAB-TolC. MacB is a non-canonical ABC transporter that contains transmembrane domains (TMD), which form a pore in the inner membrane, and an ATP-binding domain (NBD), which is responsible for energy generation. Confers resistance against macrolides. This is Macrolide export ATP-binding/permease protein MacB from Shigella boydii serotype 4 (strain Sb227).